Consider the following 229-residue polypeptide: Thiamine-phosphate synthase (229 aa).

Residues 38-42 and Asn-73 each bind 4-amino-2-methyl-5-(diphosphooxymethyl)pyrimidine; that span reads QFREK. Asp-74 and Asp-93 together coordinate Mg(2+). Ser-111 is a binding site for 4-amino-2-methyl-5-(diphosphooxymethyl)pyrimidine. 2-[(2R,5Z)-2-carboxy-4-methylthiazol-5(2H)-ylidene]ethyl phosphate is bound at residue 137–139; the sequence is TLS. Position 140 (Lys-140) interacts with 4-amino-2-methyl-5-(diphosphooxymethyl)pyrimidine. 2-[(2R,5Z)-2-carboxy-4-methylthiazol-5(2H)-ylidene]ethyl phosphate-binding positions include Gly-169 and 189 to 190; that span reads IS.

It belongs to the thiamine-phosphate synthase family. Requires Mg(2+) as cofactor.

It carries out the reaction 2-[(2R,5Z)-2-carboxy-4-methylthiazol-5(2H)-ylidene]ethyl phosphate + 4-amino-2-methyl-5-(diphosphooxymethyl)pyrimidine + 2 H(+) = thiamine phosphate + CO2 + diphosphate. It catalyses the reaction 2-(2-carboxy-4-methylthiazol-5-yl)ethyl phosphate + 4-amino-2-methyl-5-(diphosphooxymethyl)pyrimidine + 2 H(+) = thiamine phosphate + CO2 + diphosphate. The enzyme catalyses 4-methyl-5-(2-phosphooxyethyl)-thiazole + 4-amino-2-methyl-5-(diphosphooxymethyl)pyrimidine + H(+) = thiamine phosphate + diphosphate. Its pathway is cofactor biosynthesis; thiamine diphosphate biosynthesis; thiamine phosphate from 4-amino-2-methyl-5-diphosphomethylpyrimidine and 4-methyl-5-(2-phosphoethyl)-thiazole: step 1/1. In terms of biological role, condenses 4-methyl-5-(beta-hydroxyethyl)thiazole monophosphate (THZ-P) and 2-methyl-4-amino-5-hydroxymethyl pyrimidine pyrophosphate (HMP-PP) to form thiamine monophosphate (TMP). The protein is Thiamine-phosphate synthase of Streptococcus suis (strain 98HAH33).